Consider the following 95-residue polypeptide: uncharacterized protein (95 aa).

This is an uncharacterized protein from Homo sapiens (Human).